Reading from the N-terminus, the 238-residue chain is Ribitol-5-phosphate cytidylyltransferase 2 (238 aa).

Residues 7-10 (LAGG) and 81-87 (GTDRNET) each bind CTP.

The protein belongs to the IspD/TarI cytidylyltransferase family. TarI subfamily.

It catalyses the reaction D-ribitol 5-phosphate + CTP + H(+) = CDP-L-ribitol + diphosphate. It participates in cell wall biogenesis; poly(ribitol phosphate) teichoic acid biosynthesis. Functionally, catalyzes the transfer of the cytidylyl group of CTP to D-ribitol 5-phosphate. This Staphylococcus aureus (strain MRSA252) protein is Ribitol-5-phosphate cytidylyltransferase 2.